A 319-amino-acid polypeptide reads, in one-letter code: Phosphate transport system permease protein PstC (319 aa).

The next 7 membrane-spanning stretches (helical) occupy residues 25–45 (AAAA…FLLL), 84–104 (VLSS…IAVF), 120–140 (MVDL…VFVL), 141–161 (APKL…LFLF), 169–189 (AGGG…LPIV), 233–253 (AAAM…LIIL), and 289–309 (GAYI…NAVA). Residues 80-309 (FMVTVLSSIC…FLTFVVNAVA (230 aa)) form the ABC transmembrane type-1 domain.

This sequence belongs to the binding-protein-dependent transport system permease family. CysTW subfamily.

Its subcellular location is the cell membrane. Functionally, part of a binding-protein-dependent transport system for phosphate; probably responsible for the translocation of the substrate across the membrane. This Mycobacterium leprae (strain TN) protein is Phosphate transport system permease protein PstC (pstC).